Reading from the N-terminus, the 316-residue chain is Ribosomal RNA small subunit methyltransferase H (316 aa).

Residues 35–37 (SGH), D55, F84, D105, and Q112 contribute to the S-adenosyl-L-methionine site.

This sequence belongs to the methyltransferase superfamily. RsmH family.

The protein localises to the cytoplasm. It catalyses the reaction cytidine(1402) in 16S rRNA + S-adenosyl-L-methionine = N(4)-methylcytidine(1402) in 16S rRNA + S-adenosyl-L-homocysteine + H(+). Specifically methylates the N4 position of cytidine in position 1402 (C1402) of 16S rRNA. The polypeptide is Ribosomal RNA small subunit methyltransferase H (Streptococcus pyogenes serotype M49 (strain NZ131)).